The sequence spans 282 residues: Transformer-2 protein homolog alpha (282 aa).

The disordered stretch occupies residues 1–118; the sequence is MSDVEENNFE…TGSRANPDPN (118 aa). Ser-2 carries the N-acetylserine modification. Residues Ser-2 and Ser-14 each carry the phosphoserine modification. The residue at position 24 (Thr-24) is a Phosphothreonine. Over residues 51–84 the composition is skewed to basic residues; it reads RSRSKSRSRSRRHSHRRYTRSRSHSHSHRRRSRS. Ser-82, Ser-84, and Ser-86 each carry phosphoserine. The residue at position 88 (Thr-88) is a Phosphothreonine. Over residues 92–110 the composition is skewed to basic residues; the sequence is RRRRSRSHSPMSNRRRHTG. Phosphoserine is present on residues Ser-96 and Ser-98. One can recognise an RRM domain in the interval 119–197; sequence TCLGVFGLSL…RRIRVDYSIT (79 aa). Residue Lys-198 forms a Glycyl lysine isopeptide (Lys-Gly) (interchain with G-Cter in SUMO2) linkage. The segment at 198–225 is linker; that stretch reads KRAHTPTPGIYMGRPTHSGGGGGGGGGG. Disordered regions lie at residues 201 to 245 and 260 to 282; these read HTPT…YDRG and SPSP…PRRY. A phosphothreonine mark is found at Thr-202 and Thr-204. Gly residues predominate over residues 215–230; sequence SGGGGGGGGGGGGGGG. At Arg-232 the chain carries Omega-N-methylarginine. Basic and acidic residues predominate over residues 232 to 245; sequence RRRDSYYDRGYDRG. Phosphoserine is present on Ser-236. The span at 268–282 shows a compositional bias: basic residues; sequence YRSRSRSRSYSPRRY.

It belongs to the splicing factor SR family. Binds to A3 enhancer proteins SRp75, SRp55, SRp40 and SRp30. Interacts with ILDR1 (via C-terminus) and ILDR2. Post-translationally, phosphorylated in the RS domains.

It is found in the nucleus. Its function is as follows. Sequence-specific RNA-binding protein which participates in the control of pre-mRNA splicing. This is Transformer-2 protein homolog alpha from Homo sapiens (Human).